The sequence spans 300 residues: B1 kinase (300 aa).

One can recognise a Protein kinase domain in the interval 16 to 282 (WVVGPLIGKG…ITMVNSLTYF (267 aa)). ATP contacts are provided by residues 22 to 30 (IGKGGFGSI) and Lys-45. Asp-147 acts as the Proton acceptor in catalysis.

It belongs to the protein kinase superfamily. Ser/Thr protein kinase family. Poxviruses subfamily. In terms of assembly, interacts with host JIP1; this interaction increases the amount of MAPK bound to JIP1 and subsequently increases the activity of transcription factors, such as JUN, that respond to these complexes. Interacts with protein OPG198; this interaction inhibits the repressive activity of OPG198 pseudokinase on viral replication factory formation. It depends on Mg(2+) as a cofactor. Autophosphorylated.

Its subcellular location is the virion. The protein localises to the host cytoplasm. It catalyses the reaction L-seryl-[protein] + ATP = O-phospho-L-seryl-[protein] + ADP + H(+). It carries out the reaction L-threonyl-[protein] + ATP = O-phospho-L-threonyl-[protein] + ADP + H(+). Functionally, essential serine/threonine-protein kinase that plays different role in the viral life cycle. Phosphorylates the host small ribosomal protein RACK1 thereby customizing the ribosomes to a state optimal for viral mRNAs (which contain poly-A leaders) but not for host mRNAs. Facilitates viral DNA replication by inhibiting host BANF1, a cellular host defense responsive to foreign DNA. Phosphorylates host BANF1 on serine and threonine residues; this leads to BANF1 relocalization to the cytoplasm, loss of dimerization and impaired DNA binding activity. Indeed, BANF1 activity depends on its DNA-binding property which is blocked by VPK1-mediated phosphorylation. Required for viral intermediate genes expression, probably by inhibiting host BANF1. Modulates cellular responses via host JUN by two different mechanisms, either by direct phosphorylation or by modulation of upstream JIP1-MAPK complexes. Seems to participate in the accumulation/processing of late proteins and thus in virion maturation. In addition, inhibits B12 repressive activity on viral DNA replication via a phosphorylation-dependent mechanism. The protein is B1 kinase (OPG187) of Vaccinia virus (strain Ankara) (VACV).